The sequence spans 66 residues: UPF0150 protein AF_0072.1 (66 aa).

This sequence belongs to the UPF0150 family.

The protein is UPF0150 protein AF_0072.1 of Archaeoglobus fulgidus (strain ATCC 49558 / DSM 4304 / JCM 9628 / NBRC 100126 / VC-16).